Here is a 238-residue protein sequence, read N- to C-terminus: Small ribosomal subunit protein uS2c (238 aa).

This sequence belongs to the universal ribosomal protein uS2 family.

The protein localises to the plastid. The protein resides in the chloroplast. This Nuphar advena (Common spatterdock) protein is Small ribosomal subunit protein uS2c (rps2).